The following is a 291-amino-acid chain: Regulator of rDNA transcription protein 5 (291 aa).

The region spanning 21–104 (KRIYISNLDF…RTLKIKMYVP (84 aa)) is the RRM 1 domain. The interval 109 to 151 (ARAERRKEKRKVPAPQAEENPDAAPQDAQQPQPPAPAEEPTSK) is disordered. The region spanning 152 to 235 (DTVYCAYLPS…KKITLRPARL (84 aa)) is the RRM 2 domain. The tract at residues 271 to 291 (HRQQEAEIPAAETPDDVAATA) is disordered.

Belongs to the RRT5 family.

May be involved in the modulation of rDNA transcription. The chain is Regulator of rDNA transcription protein 5 (RRT5) from Lachancea thermotolerans (strain ATCC 56472 / CBS 6340 / NRRL Y-8284) (Yeast).